Consider the following 315-residue polypeptide: MQPESGANGTVIAEFILLGLLEAPGLQPVVFVLFLFAYLVTVRGNLSILAAVLVEPKLHTPMYFFLGNLSVLDVGCISVTVPSMLSRLLSRKRAVPCGACLTQLFFFHLFVGVDCFLLTAMAYDRFLAICRPLTYSTRMSQTVQRMLVAASWACAFTNALTHTVAMSTLNFCGPNVINHFYCDLPQLFQLSCSSTQLNELLLFAVGFIMAGTPMALIVISYIHVAAAVLRIRSVEGRKKAFSTCGSHLTVVAIFYGSGIFNYMRLGSTKLSDKDKAVGIFNTVINPMLNPIIYSFRNPDVQSAIWRMLTGRRSLA.

Residues 1 to 28 (MQPESGANGTVIAEFILLGLLEAPGLQP) are Extracellular-facing. Asn-8 carries an N-linked (GlcNAc...) asparagine glycan. The chain crosses the membrane as a helical span at residues 29-52 (VVFVLFLFAYLVTVRGNLSILAAV). The Cytoplasmic portion of the chain corresponds to 53–60 (LVEPKLHT). The chain crosses the membrane as a helical span at residues 61-82 (PMYFFLGNLSVLDVGCISVTVP). Topologically, residues 83 to 103 (SMLSRLLSRKRAVPCGACLTQ) are extracellular. Cys-100 and Cys-192 form a disulfide bridge. The chain crosses the membrane as a helical span at residues 104–123 (LFFFHLFVGVDCFLLTAMAY). Residues 124–143 (DRFLAICRPLTYSTRMSQTV) are Cytoplasmic-facing. A helical membrane pass occupies residues 144-161 (QRMLVAASWACAFTNALT). The Extracellular segment spans residues 162–199 (HTVAMSTLNFCGPNVINHFYCDLPQLFQLSCSSTQLNE). Residues 200-223 (LLLFAVGFIMAGTPMALIVISYIH) traverse the membrane as a helical segment. At 224 to 240 (VAAAVLRIRSVEGRKKA) the chain is on the cytoplasmic side. The helical transmembrane segment at 241-264 (FSTCGSHLTVVAIFYGSGIFNYMR) threads the bilayer. The Extracellular segment spans residues 265–275 (LGSTKLSDKDK). A helical transmembrane segment spans residues 276–295 (AVGIFNTVINPMLNPIIYSF). Residues 296–315 (RNPDVQSAIWRMLTGRRSLA) are Cytoplasmic-facing.

The protein belongs to the G-protein coupled receptor 1 family.

Its subcellular location is the cell membrane. Functionally, odorant receptor. The chain is Olfactory receptor 3A1 (OR3A1) from Homo sapiens (Human).